The following is a 307-amino-acid chain: Coproporphyrin III ferrochelatase (307 aa).

Residues Tyr-12, Arg-29, 45-46 (RY), Ser-53, and Tyr-124 each bind Fe-coproporphyrin III. Positions 181 and 263 each coordinate Fe(2+).

This sequence belongs to the ferrochelatase family.

The protein localises to the cytoplasm. It catalyses the reaction Fe-coproporphyrin III + 2 H(+) = coproporphyrin III + Fe(2+). It participates in porphyrin-containing compound metabolism; protoheme biosynthesis. In terms of biological role, involved in coproporphyrin-dependent heme b biosynthesis. Catalyzes the insertion of ferrous iron into coproporphyrin III to form Fe-coproporphyrin III. The polypeptide is Coproporphyrin III ferrochelatase (Staphylococcus saprophyticus subsp. saprophyticus (strain ATCC 15305 / DSM 20229 / NCIMB 8711 / NCTC 7292 / S-41)).